We begin with the raw amino-acid sequence, 871 residues long: Valine--tRNA ligase (871 aa).

The 'HIGH' region motif lies at 47–57 (PNVTGRLHIGH). The short motif at 534–538 (KMSKS) is the 'KMSKS' region element. Lys-537 contacts ATP. Positions 805-871 (DLTPILNRLN…IEEELARLTR (67 aa)) form a coiled coil.

The protein belongs to the class-I aminoacyl-tRNA synthetase family. ValS type 1 subfamily. As to quaternary structure, monomer.

It is found in the cytoplasm. The catalysed reaction is tRNA(Val) + L-valine + ATP = L-valyl-tRNA(Val) + AMP + diphosphate. In terms of biological role, catalyzes the attachment of valine to tRNA(Val). As ValRS can inadvertently accommodate and process structurally similar amino acids such as threonine, to avoid such errors, it has a 'posttransfer' editing activity that hydrolyzes mischarged Thr-tRNA(Val) in a tRNA-dependent manner. This is Valine--tRNA ligase from Nitratiruptor sp. (strain SB155-2).